Reading from the N-terminus, the 134-residue chain is Profilin-1 (134 aa).

A disulfide bridge links C13 with C118. An Involved in PIP2 interaction motif is present at residues 84–100 (AVIRGKKGSGGITIKKT). T114 bears the Phosphothreonine mark.

It belongs to the profilin family. In terms of assembly, occurs in many kinds of cells as a complex with monomeric actin in a 1:1 ratio. Phosphorylated by MAP kinases.

It localises to the cytoplasm. The protein resides in the cytoskeleton. Binds to actin and affects the structure of the cytoskeleton. At high concentrations, profilin prevents the polymerization of actin, whereas it enhances it at low concentrations. The chain is Profilin-1 from Olea europaea (Common olive).